Consider the following 69-residue polypeptide: Cytochrome c oxidase subunit 8A, mitochondrial (69 aa).

The transit peptide at 1-25 directs the protein to the mitochondrion; that stretch reads MSVLTSLLLRGLTGSARWLPVPRAK. Positions 2–19 match the SIFI-degron motif; it reads SVLTSLLLRGLTGSARWL. Topologically, residues 26-36 are mitochondrial matrix; the sequence is VHSMPPEVELG. Residues 37–60 traverse the membrane as a helical segment; sequence IMEKAIGLTSCFVSLFLPAGWILS. At 61-69 the chain is on the mitochondrial intermembrane side; it reads HLEDYKRPE.

It belongs to the cytochrome c oxidase VIII family. As to quaternary structure, component of the cytochrome c oxidase (complex IV, CIV), a multisubunit enzyme composed of 14 subunits. The complex is composed of a catalytic core of 3 subunits MT-CO1, MT-CO2 and MT-CO3, encoded in the mitochondrial DNA, and 11 supernumerary subunits COX4I, COX5A, COX5B, COX6A, COX6B, COX6C, COX7A, COX7B, COX7C, COX8 and NDUFA4, which are encoded in the nuclear genome. The complex exists as a monomer or a dimer and forms supercomplexes (SCs) in the inner mitochondrial membrane with NADH-ubiquinone oxidoreductase (complex I, CI) and ubiquinol-cytochrome c oxidoreductase (cytochrome b-c1 complex, complex III, CIII), resulting in different assemblies (supercomplex SCI(1)III(2)IV(1) and megacomplex MCI(2)III(2)IV(2)). Post-translationally, in response to mitochondrial stress, the precursor protein is ubiquitinated by the SIFI complex in the cytoplasm before mitochondrial import, leading to its degradation. Within the SIFI complex, UBR4 initiates ubiquitin chain that are further elongated or branched by KCMF1.

The protein resides in the mitochondrion inner membrane. It participates in energy metabolism; oxidative phosphorylation. Functionally, component of the cytochrome c oxidase, the last enzyme in the mitochondrial electron transport chain which drives oxidative phosphorylation. The respiratory chain contains 3 multisubunit complexes succinate dehydrogenase (complex II, CII), ubiquinol-cytochrome c oxidoreductase (cytochrome b-c1 complex, complex III, CIII) and cytochrome c oxidase (complex IV, CIV), that cooperate to transfer electrons derived from NADH and succinate to molecular oxygen, creating an electrochemical gradient over the inner membrane that drives transmembrane transport and the ATP synthase. Cytochrome c oxidase is the component of the respiratory chain that catalyzes the reduction of oxygen to water. Electrons originating from reduced cytochrome c in the intermembrane space (IMS) are transferred via the dinuclear copper A center (CU(A)) of subunit 2 and heme A of subunit 1 to the active site in subunit 1, a binuclear center (BNC) formed by heme A3 and copper B (CU(B)). The BNC reduces molecular oxygen to 2 water molecules using 4 electrons from cytochrome c in the IMS and 4 protons from the mitochondrial matrix. The protein is Cytochrome c oxidase subunit 8A, mitochondrial (COX8A) of Macaca silenus (Lion-tailed macaque).